The chain runs to 120 residues: Xibalbin-1 (120 aa).

Positions 1–21 (MISKILIAACALLLISHLVLA) are cleaved as a signal peptide. A propeptide spanning residues 22-63 (VPYLEDGLNSLHNRTGESDETRGYTIQLLKEMPEDDAVEDYS) is cleaved from the precursor. Intrachain disulfides connect Cys-79–Cys-94, Cys-86–Cys-99, Cys-93–Cys-110, and Cys-101–Cys-108.

It belongs to the xibalbin-1 family. As to expression, expressed by the venom gland. Not found in the whole body.

The protein resides in the secreted. Its function is as follows. Probable neurotoxin. Strongly inhibits voltage-gated potassium channels (Kv1.1/KCNA1, Kv1.2/KCNA2, Kv1.3/KCNA3, and Kv1.6/KCNA6, with the highest toxicity against Kv1.6 (74% inhibition at 1 uM)) and mildly inhibits sodium channels (Nav1.2/SCN2A, Nav1.4/SCN4A, Nav1.5/SCN5A, Nav1.6/SCN8A, and BgNav). Induces activation of protein kinase A type II (PKA-II) and MAP kinase Erk1/2 in primary nociceptive and non-nociceptive sensory neurons. Does not show cytotoxic activity. Does not have an impact on Ca2+, cAMP, and NO signaling in the cell types analyzed. Does not interfere with the adhesion of leukocytes to endothelial cells. This Xibalbanus tulumensis (Blind cave remipede) protein is Xibalbin-1.